The following is a 500-amino-acid chain: ADP,ATP carrier protein 5 (500 aa).

Helical transmembrane passes span 26 to 46 (LGKF…QNIL), 62 to 82 (IAGF…VIIY), 94 to 114 (IFYY…FVIY), 149 to 169 (YIVY…LLFW), 184 to 204 (FYTL…FLMM), 224 to 244 (ITLV…CCLL), 287 to 307 (LWLL…VEAV), 328 to 348 (LYIL…NNVM), 357 to 377 (AVIS…LIVF), 381 to 401 (ILSL…VSIG), and 469 to 489 (SISP…IYAV).

It belongs to the ADP/ATP translocase tlc family.

It localises to the cell membrane. Its function is as follows. Provides the rickettsial cell with host ATP in exchange for rickettsial ADP. This is an obligate exchange system. This energy acquiring activity is an important component of rickettsial parasitism. The polypeptide is ADP,ATP carrier protein 5 (tlcE) (Rickettsia typhi (strain ATCC VR-144 / Wilmington)).